The chain runs to 221 residues: Imidazoleglycerol-phosphate dehydratase (221 aa).

Belongs to the imidazoleglycerol-phosphate dehydratase family.

It carries out the reaction D-erythro-1-(imidazol-4-yl)glycerol 3-phosphate = 3-(imidazol-4-yl)-2-oxopropyl phosphate + H2O. It participates in amino-acid biosynthesis; L-histidine biosynthesis; L-histidine from 5-phospho-alpha-D-ribose 1-diphosphate: step 6/9. This Kluyveromyces marxianus (Yeast) protein is Imidazoleglycerol-phosphate dehydratase (HIS3).